A 463-amino-acid chain; its full sequence is L-seryl-tRNA(Sec) selenium transferase (463 aa).

Lys295 carries the N6-(pyridoxal phosphate)lysine modification.

Belongs to the SelA family. Homodecamer; pentamer of dimers. Binds only one seryl-tRNA(Sec) per dimer. The cofactor is pyridoxal 5'-phosphate.

The protein localises to the cytoplasm. The catalysed reaction is L-seryl-tRNA(Sec) + selenophosphate + H(+) = L-selenocysteinyl-tRNA(Sec) + phosphate. Its pathway is aminoacyl-tRNA biosynthesis; selenocysteinyl-tRNA(Sec) biosynthesis; selenocysteinyl-tRNA(Sec) from L-seryl-tRNA(Sec) (bacterial route): step 1/1. Functionally, converts seryl-tRNA(Sec) to selenocysteinyl-tRNA(Sec) required for selenoprotein biosynthesis. This chain is L-seryl-tRNA(Sec) selenium transferase, found in Salmonella typhimurium (strain LT2 / SGSC1412 / ATCC 700720).